Reading from the N-terminus, the 463-residue chain is UDP-glucosyltransferase A1 (463 aa).

The protein belongs to the UDP-glycosyltransferase family.

It catalyses the reaction 18-hydroxy-(9Z)-octadecenoate + UDP-alpha-D-glucose = (9Z)-18-hydroxyoctadec-9-enoate 18-O-beta-D-glucoside + UDP + H(+). The enzyme catalyses 17-hydroxy-(9Z)-octadecenoate + UDP-alpha-D-glucose = (9Z)-17-hydroxyoctadec-9-enoate 17-O-beta-D-glucoside + UDP + H(+). In terms of biological role, catalyzes the first glycosylation step of sophorolipid biosynthesis, the coupling of glucose to a hydroxylated fatty acid to give rise to a glucolipid. Can glycosylate all hydroxyl fatty acids generated by cytochrome P450 monooxygenases CYP52M1, CYP52N1 and CYP52E3 into their corresponding glucolipids. Main products are 17-O- and 18-O-(beta-D-glucopyranosyl)-octadecenoic acids. The protein is UDP-glucosyltransferase A1 of Starmerella bombicola (Yeast).